The following is a 60-amino-acid chain: Sec-independent protein translocase protein TatA (60 aa).

A helical membrane pass occupies residues 1–21 (MTPAGPAQLLIVALVVIVLFG).

Belongs to the TatA/E family. As to quaternary structure, the Tat system comprises two distinct complexes: a TatABC complex, containing multiple copies of TatA, TatB and TatC subunits, and a separate TatA complex, containing only TatA subunits. Substrates initially bind to the TatABC complex, which probably triggers association of the separate TatA complex to form the active translocon.

It localises to the cell membrane. Its function is as follows. Part of the twin-arginine translocation (Tat) system that transports large folded proteins containing a characteristic twin-arginine motif in their signal peptide across membranes. TatA could form the protein-conducting channel of the Tat system. In Corynebacterium glutamicum (strain R), this protein is Sec-independent protein translocase protein TatA.